We begin with the raw amino-acid sequence, 474 residues long: C6 finger domain transcription factor aclZ (474 aa).

A DNA-binding region (zn(2)-C6 fungal-type) is located at residues 42–69 (CNQCHAAKVRCSGERTGCDRCNNLQYQC). 2 disordered regions span residues 85–148 (RGNK…SHSA) and 177–206 (MSSD…DSHT). Over residues 90-105 (VRTTTEALQRPATAST) the composition is skewed to polar residues. The segment covering 117 to 138 (TDQRSENDPLSRSDFGEQDAAH) has biased composition (basic and acidic residues).

Its subcellular location is the nucleus. In terms of biological role, transcription factor that specifically regulates the gene cluster that mediates the biosynthesis of aspirochlorine (or antibiotic A30641), an unusual halogenated spiro compound with distinctive antifungal properties due to selective inhibition of protein biosynthesis, and which is also active against bacteria, viruses, and murine tumor cells. The protein is C6 finger domain transcription factor aclZ of Aspergillus oryzae (strain ATCC 42149 / RIB 40) (Yellow koji mold).